Consider the following 348-residue polypeptide: Rhodopsin (348 aa).

At M1 the chain carries N-acetylmethionine. The Extracellular portion of the chain corresponds to 1 to 36 (MNGTEGPNFYVPFSNKTGVVRSPFEFPQYYLAEPWQ). N-linked (GlcNAc...) asparagine glycosylation is found at N2 and N15. The chain crosses the membrane as a helical span at residues 37-61 (FSMLAAYMFLLIVLGFPINFLTLYV). The Cytoplasmic portion of the chain corresponds to 62–73 (TVQHKKLRTPLN). A helical membrane pass occupies residues 74 to 96 (YILLNLAVADLFMVFGGFTTTLY). At 97-110 (TSLHGYFVFGPTGC) the chain is on the extracellular side. A disulfide bridge links C110 with C187. A helical transmembrane segment spans residues 111-133 (NLEGFFATLGGEIALWSLVVLAI). The 'Ionic lock' involved in activated form stabilization motif lies at 134–136 (ERY). The Cytoplasmic segment spans residues 134–152 (ERYVVVCKPMSNFRFGENH). The chain crosses the membrane as a helical span at residues 153–173 (AIMGVGFTWVMALACAAPPLV). At 174–202 (GWSRYIPEGMQCSCGIDYYTLKPEVNNES) the chain is on the extracellular side. E201 contributes to the Zn(2+) binding site. The chain crosses the membrane as a helical span at residues 203 to 224 (FVIYMFVVHFTIPMIVIFFCYG). The Cytoplasmic portion of the chain corresponds to 225–252 (QLVFTVKEAAAQQQESATTQKAEKEVTR). A helical membrane pass occupies residues 253–274 (MVIIMVIAFLICWVPYASVAFY). Over 275–286 (IFTHQGSNFGPI) the chain is Extracellular. Q279 lines the Zn(2+) pocket. The chain crosses the membrane as a helical span at residues 287 to 308 (FMTLPAFFAKAASIYNPVIYIM). K296 carries the post-translational modification N6-(retinylidene)lysine. At 309 to 348 (MNKQFRTCMITTLCCGKNPLGDDEVSASASKTETSQVAPA) the chain is on the cytoplasmic side. 2 S-palmitoyl cysteine lipidation sites follow: C322 and C323. Residues 330–348 (DDEVSASASKTETSQVAPA) form an interaction with SAG region. S334 and S338 each carry phosphoserine. T340 and T342 each carry phosphothreonine. Phosphoserine is present on S343.

The protein belongs to the G-protein coupled receptor 1 family. Opsin subfamily. Homodimer. May form a complex composed of RHO, GRK1 and RCVRN in a Ca(2+)-dependent manner; RCVRN prevents the interaction between GRK1 and RHO. Interacts with GRK1. Interacts (phosphorylated form) with SAG. Interacts with GNAT1. Interacts with GNAT3. SAG and G-proteins compete for a common binding site. Interacts with PRCD; the interaction promotes PRCD stability. Forms a complex with ASAP1 and ARF4. Forms a complex with ASAP1, RAB11A, Rabin8/RAB3IP, ARF4 and RAB11FIP3; the complex regulates Golgi-to-cilia rhodopsin/RHO transport in photoreceptors. Post-translationally, phosphorylated on some or all of the serine and threonine residues present in the C-terminal region. Contains one covalently linked retinal chromophore. Upon light absorption, the covalently bound 11-cis-retinal is converted to all-trans-retinal. After hydrolysis of the Schiff base and release of the covalently bound all-trans-retinal, active rhodopsin is regenerated by binding of a fresh molecule of 11-cis-retinal.

It is found in the membrane. The protein resides in the cell projection. The protein localises to the cilium. Its subcellular location is the photoreceptor outer segment. Functionally, photoreceptor required for image-forming vision at low light intensity. Required for photoreceptor cell viability after birth. Light-induced isomerization of 11-cis to all-trans retinal triggers a conformational change that activates signaling via G-proteins. Subsequent receptor phosphorylation mediates displacement of the bound G-protein alpha subunit by the arrestin SAG and terminates signaling. The sequence is that of Rhodopsin (RHO) from Phoca vitulina (Harbor seal).